The chain runs to 532 residues: FRIGIDA-like protein 4b (532 aa).

The protein belongs to the Frigida family. As to expression, expressed in leaves, shoot apex, flowers and during seed development.

The protein is FRIGIDA-like protein 4b (FRL4B) of Arabidopsis thaliana (Mouse-ear cress).